We begin with the raw amino-acid sequence, 157 residues long: 3-hydroxyacyl-[acyl-carrier-protein] dehydratase FabZ (157 aa).

The active site involves histidine 58.

Belongs to the thioester dehydratase family. FabZ subfamily.

It localises to the cytoplasm. It carries out the reaction a (3R)-hydroxyacyl-[ACP] = a (2E)-enoyl-[ACP] + H2O. In terms of biological role, involved in unsaturated fatty acids biosynthesis. Catalyzes the dehydration of short chain beta-hydroxyacyl-ACPs and long chain saturated and unsaturated beta-hydroxyacyl-ACPs. The polypeptide is 3-hydroxyacyl-[acyl-carrier-protein] dehydratase FabZ (Brucella ovis (strain ATCC 25840 / 63/290 / NCTC 10512)).